We begin with the raw amino-acid sequence, 378 residues long: Cyclic GMP-AMP synthase-like receptor 1 (378 aa).

Positions 71, 73, and 187 each coordinate Mg(2+). ATP is bound at residue 71–73 (EFD). GTP contacts are provided by residues Asp187 and 233-240 (TSSFYEAE). Residues 237–240 (YEAE), Lys258, and 271–275 (SYHIK) contribute to the ATP site.

The protein belongs to the mab-21 family. The cofactor is Mg(2+). Mn(2+) serves as cofactor.

It carries out the reaction GTP + ATP = 3',2'-cGAMP + 2 diphosphate. The enzyme catalyses GTP + ATP = pppA(2'-5')pG + diphosphate. It catalyses the reaction pppA(2'-5')pG = 3',2'-cGAMP + diphosphate. Its activity is regulated as follows. The enzyme activity is specifically activated by double-stranded RNA (dsRNA). Recognizes long dsRNA (&gt;30 bp) with no preference for 5' RNA phosphorylation. Functionally, nucleotidyltransferase that catalyzes the formation of cyclic GMP-AMP (3',2'-cGAMP) from ATP and GTP and plays a key role in antiviral innate immunity. Synthesizes 3',2'-cGAMP in a two-step reaction through production of the linear intermediate pppA(2'-5')pG. Acts as a key sensor of double-stranded RNA (dsRNA), the presence of dsRNA in the cytoplasm being a danger signal that triggers the immune responses. Directly binds dsRNA, activating the nucleotidyltransferase activity, leading to synthesis of 3',2'-cGAMP, a second messenger that binds to and activates Sting, thereby triggering the antiviral immune response via activation of the NF-kappa-B transcription factor Rel (Relish). 3',2'-cGAMP is protected from poxin cleavage. This Drosophila melanogaster (Fruit fly) protein is Cyclic GMP-AMP synthase-like receptor 1.